A 363-amino-acid chain; its full sequence is Fructose-bisphosphate aldolase 1 (363 aa).

Asp34 lines the dihydroxyacetone phosphate pocket. 2 residues coordinate D-glyceraldehyde 3-phosphate: Ser36 and Thr39. Arg43 provides a ligand contact to beta-D-fructose 1,6-bisphosphate. Lys107 is a binding site for D-glyceraldehyde 3-phosphate. Lys146 provides a ligand contact to dihydroxyacetone phosphate. Glu189 lines the D-glyceraldehyde 3-phosphate pocket. Glu189 serves as the catalytic Proton acceptor. Residues Lys231, Ser273, and Gly274 each contribute to the dihydroxyacetone phosphate site. The active-site Schiff-base intermediate with dihydroxyacetone phosphate is Lys231. Beta-D-fructose 1,6-bisphosphate-binding positions include 273–275 (SGG) and Ser301. Dihydroxyacetone phosphate is bound by residues Gly303 and Arg304. Arg304 lines the beta-D-fructose 1,6-bisphosphate pocket.

The protein belongs to the class I fructose-bisphosphate aldolase family. As to quaternary structure, homotetramer. Component of a complex, at least composed of ald-1, microneme protein MIC2 and ACT1. Interacts with microneme protein MIC2 (via cytoplasmic tail). Interacts with ACT1 (F-actin).

The protein localises to the cytoplasm. The enzyme catalyses beta-D-fructose 1,6-bisphosphate = D-glyceraldehyde 3-phosphate + dihydroxyacetone phosphate. It participates in carbohydrate degradation; glycolysis; D-glyceraldehyde 3-phosphate and glycerone phosphate from D-glucose: step 4/4. Plays a key role in glycolysis by catalyzing the cleavage of fructose 1,6-bisphosphate into dihydroxyacetone phosphate and glyceraldehyde 3-phosphate. Forms a bridge between cell surface adhesins and the actin cytoskeleton. Required for parasite invasion of host cells. The sequence is that of Fructose-bisphosphate aldolase 1 from Toxoplasma gondii.